A 206-amino-acid chain; its full sequence is Ribosomal RNA large subunit methyltransferase E (206 aa).

Positions 60, 62, 80, 96, and 121 each coordinate S-adenosyl-L-methionine. Lys-161 (proton acceptor) is an active-site residue.

The protein belongs to the class I-like SAM-binding methyltransferase superfamily. RNA methyltransferase RlmE family.

It is found in the cytoplasm. The catalysed reaction is uridine(2552) in 23S rRNA + S-adenosyl-L-methionine = 2'-O-methyluridine(2552) in 23S rRNA + S-adenosyl-L-homocysteine + H(+). Specifically methylates the uridine in position 2552 of 23S rRNA at the 2'-O position of the ribose in the fully assembled 50S ribosomal subunit. This is Ribosomal RNA large subunit methyltransferase E from Francisella philomiragia subsp. philomiragia (strain ATCC 25017 / CCUG 19701 / FSC 153 / O#319-036).